The chain runs to 2476 residues: Transcriptional regulator ATRX (2476 aa).

Lys-10 participates in a covalent cross-link: Glycyl lysine isopeptide (Lys-Gly) (interchain with G-Cter in SUMO2). The segment at 24-154 (HSSEESEETC…FRSRSKMKAD (131 aa)) is disordered. Ser-25 and Ser-34 each carry phosphoserine. Residues 40–57 (MNQSTDKICGSGLNSDMM) are compositionally biased toward polar residues. Residues 58-72 (ENNKEEGASTSEKSR) are compositionally biased toward basic and acidic residues. A Phosphotyrosine modification is found at Tyr-89. At Ser-92 the chain carries Phosphoserine. Positions 98-107 (TDENVNEKAA) are enriched in basic and acidic residues. A compositionally biased stretch (polar residues) spans 108 to 121 (TENSENDITMQSLP). Ser-111 carries the phosphoserine modification. The segment covering 134 to 154 (NEDKDDFKGPEFRSRSKMKAD) has biased composition (basic and acidic residues). Glycyl lysine isopeptide (Lys-Gly) (interchain with G-Cter in SUMO2) cross-links involve residues Lys-137 and Lys-141. An ADD domain is found at 158-295 (KRGEDGLHGI…LEQLLQQNKK (138 aa)). The GATA-type; atypical zinc finger occupies 169–205 (SCTACGQQVNHFQKDSIYRHPSLKVLICKNCFKYYMS). Ser-212 carries the post-translational modification Phosphoserine. The PHD-type; atypical zinc finger occupies 216–271 (DEQCRWCAEGGNLICCDFCHNAFCKKCILRNLGRKELSTIMDENNQWYCYICQPEP). Lys-298 participates in a covalent cross-link: Glycyl lysine isopeptide (Lys-Gly) (interchain with G-Cter in SUMO2). Ser-315 carries the phosphoserine modification. Disordered regions lie at residues 427–451 (EKNTKDLKSTDAKSETKLGKGEKSY), 466–507 (SVKA…DLDM), and 525–568 (ESAM…NIKS). Lys-439 is covalently cross-linked (Glycyl lysine isopeptide (Lys-Gly) (interchain with G-Cter in SUMO2)). The span at 466 to 494 (SVKAIDGEEQRAHKSTSGEHKGSGRKDGS) shows a compositional bias: basic and acidic residues. A compositionally biased stretch (polar residues) spans 549-559 (ESSSVKLNVSS). The short motif at 573-586 (KVRKELFVKLTPVS) is the PxVxL motif element. Thr-583 bears the Phosphothreonine mark. Disordered regions lie at residues 585 to 877 (VSLS…GGSI) and 893 to 1464 (PGVS…GRKK). 7 positions are modified to phosphoserine: Ser-586, Ser-590, Ser-626, Ser-663, Ser-665, Ser-717, and Ser-719. The segment covering 615-630 (SSEKCRPREEISDHEN) has biased composition (basic and acidic residues). The span at 732–746 (MGHSSSSDTDINEPQ) shows a compositional bias: polar residues. Phosphoserine occurs at positions 766, 801, 828, 829, 854, 855, and 871. Positions 819–849 (SVPEKKEEDSSEDEKQGKKVVDNGGHERAKT) are enriched in basic and acidic residues. Basic and acidic residues predominate over residues 899–922 (GAEKPSVKEENVNSPEDKRVSKTK). The span at 923 to 937 (EKTKHLRSRQSRKGK) shows a compositional bias: basic residues. Residues Ser-941 and Ser-953 each carry the phosphoserine modification. Basic and acidic residues predominate over residues 943-963 (GTDRFPKKEQSDESSEGEKKQ). Basic residues predominate over residues 964–973 (SRQRPGTKGK). Residues 974–988 (KAPDLKGETLKREQE) are compositionally biased toward basic and acidic residues. Lys-984 participates in a covalent cross-link: Glycyl lysine isopeptide (Lys-Gly) (interchain with G-Cter in SUMO2). 4 positions are modified to phosphoserine: Ser-991, Ser-992, Ser-993, and Ser-1041. Residues 1031-1061 (DKSCEKKEELSDSVDKLPGKGDSCDSSEDKK) show a composition bias toward basic and acidic residues. Positions 1062 to 1074 (TRNRVSLREKKRF) are enriched in basic residues. Arg-1063 carries the citrulline modification. Composition is skewed to basic and acidic residues over residues 1083-1096 (KRPECSSSDTEKSL) and 1103-1129 (STEKRPKRIDLRERRNSSSKRNTKEVK). Over residues 1146–1175 (KQKKQRTSAKKKTGNTKEKKRNSLRATPKR) the composition is skewed to basic residues. The interaction with DAXX stretch occupies residues 1169 to 1313 (LRATPKRKQV…VNQVNSESDS (145 aa)). Residues Ser-1223, Ser-1224, and Ser-1232 each carry the phosphoserine modification. A compositionally biased stretch (basic and acidic residues) spans 1246-1260 (PENRIAKKMLLEEIK). The segment covering 1265-1276 (SDEDGSSDDEPD) has biased composition (acidic residues). Phosphoserine occurs at positions 1309, 1311, and 1313. Over residues 1321-1332 (PRYRHRLLRHKL) the composition is skewed to basic residues. Residues Ser-1335 and Ser-1339 each carry the phosphoserine modification. 2 stretches are compositionally biased toward basic and acidic residues: residues 1340–1355 (GEEKPTKPKEHKEAKG) and 1395–1404 (KKAELEENQR). Basic residues predominate over residues 1406–1415 (YKQKKKRRRI). A compositionally biased stretch (basic and acidic residues) spans 1416–1436 (KVQEDSSSENKSHSEEDKKEG). The span at 1437–1453 (DEEDEEDEDEDEEDEND) shows a compositional bias: acidic residues. Lys-1473 is covalently cross-linked (Glycyl lysine isopeptide (Lys-Gly) (interchain with G-Cter in SUMO2)). Ser-1512 is subject to Phosphoserine. The residue at position 1514 (Thr-1514) is a Phosphothreonine. The region spanning 1566–1753 (KTKKSPGSGC…HCMVNFIKEN (188 aa)) is the Helicase ATP-binding domain. ATP is bound at residue 1579-1586 (HCMGLGKT). A DEGH box motif is present at residues 1704–1707 (DEGH). Phosphoserine is present on residues Ser-1891 and Ser-1898. The segment at 1898-1982 (SDSDETSKSL…STSNPSSPAP (85 aa)) is disordered. Positions 1902–1913 (ETSKSLSSDEKK) are enriched in basic and acidic residues. Lys-1965 participates in a covalent cross-link: Glycyl lysine isopeptide (Lys-Gly) (interchain with G-Cter in SUMO1); alternate. Lys-1965 participates in a covalent cross-link: Glycyl lysine isopeptide (Lys-Gly) (interchain with G-Cter in SUMO2); alternate. A Glycyl lysine isopeptide (Lys-Gly) (interchain with G-Cter in SUMO2) cross-link involves residue Lys-1970. Positions 1971 to 1982 (TTSTSNPSSPAP) are enriched in low complexity. 2 positions are modified to phosphoserine: Ser-1975 and Ser-1979. Residues 1993 to 2263 (DAEVLEHSGK…RKAAWAEYEA (271 aa)) form an interaction with MECP2 region. In terms of domain architecture, Helicase C-terminal spans 2008–2188 (EILRMAEEIG…ERHFTMNELT (181 aa)). A Phosphoserine modification is found at Ser-2203. Residues 2445-2476 (SVAGGMQPPPLQRAPPPTVRSKNPGPSPGKSM) are disordered. Pro residues predominate over residues 2451–2462 (QPPPLQRAPPPT). Omega-N-methylarginine is present on residues Arg-2457 and Arg-2464.

The protein belongs to the SNF2/RAD54 helicase family. In terms of assembly, interacts with DAXX to form the chromatin remodeling complex ATRX:DAXX. Probably binds EZH2. Binds annexin V in a calcium and phosphatidylcholine/phosphatidylserine-dependent manner. Interacts directly with CBX5 via the PxVxL motif. Interacts with RAD50, MRE11 and NBN; indicative for an association with the MRN complex. Interacts with histone MACROH2A1. Interacts with histone H3 peptides methylated at 'Lys-10' with preferences H3K9me3 &gt; H3K9me2 &gt; H3K9me1. Interacts with histone H3 peptides unmethylated at 'Lys-5' (H3K4me0). Interacts with MECP2, SMC1 and SMC3. Interacts with SETDB1, TRIM28 and ZNF274. In terms of processing, citrullinated by PADI4.

Its subcellular location is the nucleus. It is found in the chromosome. It localises to the telomere. The protein resides in the PML body. It catalyses the reaction ATP + H2O = ADP + phosphate + H(+). In terms of biological role, involved in transcriptional regulation and chromatin remodeling. Facilitates DNA replication in multiple cellular environments and is required for efficient replication of a subset of genomic loci. Binds to DNA tandem repeat sequences in both telomeres and euchromatin and in vitro binds DNA quadruplex structures. May help stabilizing G-rich regions into regular chromatin structures by remodeling G4 DNA and incorporating H3.3-containing nucleosomes. Catalytic component of the chromatin remodeling complex ATRX:DAXX which has ATP-dependent DNA translocase activity and catalyzes the replication-independent deposition of histone H3.3 in pericentric DNA repeats outside S-phase and telomeres, and the in vitro remodeling of H3.3-containing nucleosomes. Its heterochromatin targeting is proposed to involve a combinatorial readout of histone H3 modifications (specifically methylation states of H3K9 and H3K4) and association with CBX5. Involved in maintaining telomere structural integrity in embryonic stem cells probably implying recruitment of CBX5 to telomeres. Reports on the involvement in transcriptional regulation of telomeric repeat-containing RNA (TERRA) are conflicting; according is required for its transcriptional repression in embryonic stem cells. Acts as a negative regulator of chromatin incorporation of transcriptionally repressive histone MACROH2A1, particularily at telomeres. Participates in the allele-specific gene expression at the imprinted IGF2/H19 gene locus. On the maternal allele, required for the chromatin occupancy of SMC1 and CTCTF within the H19 imprinting control region (ICR) and involved in esatblishment of histone tails modifications in the ICR. Binds to zinc-finger coding genes with atypical chromatin signatures and regulates its H3K9me3 levels. Forms a complex with ZNF274, TRIM28 and SETDB1 to facilitate the deposition and maintenance of H3K9me3 at the 3' exons of zinc-finger genes. The protein is Transcriptional regulator ATRX (Atrx) of Mus musculus (Mouse).